Here is a 1669-residue protein sequence, read N- to C-terminus: MHSKTAPRFLVFLLLTLLLLLAASPVASKGCVCKGKGQCLCAGTKGEKGEKGVPGSPGFPGQKGFPGPEGLPGPQGPKGSPGLPGLTGPKGIRGITGLPGFAGPPGLPGLPGHPGPRGLAGLPGCNGSKGEQGFPGFPGTPGYAGLPGPDGLKGQKGEPAQGEDRGFNGKGDPGPPGVPGFQGFPGLPGFPGPAGPPGPPGFFGLPGAMGPRGPKGHMGDSVIGQKGERGMKGLTGPPGPPGTVIFTLTQPYNKSDFKGEKGDEGERGEPGPPGPSGPPGDSYGSEKGAPGEPGPRGKPGKDGAPGFPGTEGAKGNRGFPGLRGEAGIKGRKGDIGPPGFPGPTEYYDAYLEKGERGMPGLPGPKGARGPQGPSGPPGVPGSPGLSRPGLRGPIGWPGLKGSKGERGPPGKDTVGPPGPLGCPGSPGPPGPPGPPGCPGDIVFKCSPGEHGMPGDTGPPGVPGLDGPKGEPGSPCTECHCFPGPPGVPGFPGLDGIKGIPGGRGVPGLKGNPGSPGSAGLPGFAGFPGDQGHPGLKGDKGDTPLPWGQVGNPGDPGLRGLPGRKGFDGTPGGPGAKGPPGPQGEPALSGRKGDQGPPGPPGFPGPPGPAGPAGPPGYGPQGEPGPKGAQGVPGVLGPPGEAGLKGEPSTSTPDLGPPGPPGPPGQAGPRGLPGLPGPVGKCDPGLPGPDGEPGIPEAGCPGPPGPKGNQGFPGTKGSPGCPGEMGKPGRPGEPGIPGAKGEPSVGRPGKPGKPGFPGERGNAGENGDIGLPGLPGLPGTPGRGGLDGPPGDPGQPGSPGAKGSPGRCIPGPRGTQGLPGLNGLKGQPGRRGDTGPKGDPGIPGMDRSGVPGDPGPPGTPGCPGEMGPPGQKGYPGAPGFPGPPGEKGEVGMMGYPGTTGPPGLPGKPGSQGQRGSLGIPGMKGEKGRPGAKGERGEKGKPGPSQTTLLKGDKGEPGLKGFVGNPGEKGNRGNPGLPGPKGLEGLPGLPGPPGPRGDTGSRGNPGRPGPHGMPGSMGIMGVPGPKGRKGTSGLPGLAGRPGLTGIHGPQGDKGEPGYSEGARPGPPGPKGDPGLPGDKGKKGERGVPGPPGQSGPAGPDGAPGSPGSPGHPGKPGPAGDLGLKGQKGFPGPPGSTGPPGPPGLPGLPGPMGMRGDQGRDGIPGPPGEKGETGLLGAYPGPKGSPGVPGAKGDRGVPGLSGLPGRKGVMGDVGPQGPPGTAGLPGPPGLPGAIIPGPKGDRGLPGLRGNPGEPGPPGPPGPIGKGIKGDKGFMGPPGPKGLPGTVGDMGPPGFPGAPGTPGLPGVRGDPGFPGFPGIKGEKGNPGFLGPIGHPGPVGPKGPPGPRGKPGTLKVISLPGSPGPPGVPGQPGMKGDPGPLGLPGIPGPCGPRGKPGKDGKPGTPGPAGTKGNKGLKGQQGPPGLDGLPGLKGNPGDRGTPATGTRMRGFIFTRHSQTTAIPSCPEGTQPLYSGFSLLFVQGNKRAHGQDLGTLGSCLQRFTTMPFLFCNINNVCNFASRNDYSYWLSTPALMPMDMAPISGRALEPYISRCTVCEGPAMAIAVHSQTTAIPPCPQDWVSLWKGFSFIMFTSAGSEGAGQALASPGSCLEEFRASPFIECHGRGTCNYYSNSYSFWLASLNPERMFRKPIPSTVKAGDLEKIISRCQVCMKKRH.

The first 28 residues, 1-28 (MHSKTAPRFLVFLLLTLLLLLAASPVAS), serve as a signal peptide directing secretion. Residues 29–42 (KGCVCKGKGQCLCA) are 7S domain. Positions 43–1436 (GTKGEKGEKG…KGNPGDRGTP (1394 aa)) are triple-helical region. 2 disordered regions span residues 44 to 473 (TKGE…EPGS) and 500 to 1439 (PGGR…PATG). Low complexity predominate over residues 54–68 (PGSPGFPGQKGFPGP). The segment covering 105–114 (PGLPGLPGHP) has biased composition (pro residues). An N-linked (GlcNAc...) asparagine glycan is attached at asparagine 126. Residues 188-200 (PGFPGPAGPPGPP) show a composition bias toward pro residues. The span at 202–211 (FFGLPGAMGP) shows a compositional bias: low complexity. An N-linked (GlcNAc...) asparagine glycan is attached at asparagine 253. Over residues 255–269 (SDFKGEKGDEGERGE) the composition is skewed to basic and acidic residues. Composition is skewed to low complexity over residues 279–290 (PGDSYGSEKGAP) and 382–393 (SPGLSRPGLRGP). Positions 416-437 (PPGPLGCPGSPGPPGPPGPPGC) are enriched in pro residues. The span at 551–560 (NPGDPGLRGL) shows a compositional bias: low complexity. Pro residues-rich tracts occupy residues 596–617 (PPGPPGFPGPPGPAGPAGPPGY) and 654–665 (LGPPGPPGPPGQ). Over residues 666–684 (AGPRGLPGLPGPVGKCDPG) the composition is skewed to low complexity. Over residues 778–787 (GTPGRGGLDG) the composition is skewed to gly residues. A Cell attachment site motif is present at residues 830 to 832 (RGD). Residues 861–876 (CPGEMGPPGQKGYPGA) show a composition bias toward low complexity. Basic and acidic residues predominate over residues 922 to 939 (KGEKGRPGAKGERGEKGK). Over residues 970 to 985 (RGNPGLPGPKGLEGLP) the composition is skewed to low complexity. Positions 994-996 (RGD) match the Cell attachment site motif. Positions 1092–1103 (SGPAGPDGAPGS) are enriched in low complexity. The segment covering 1128–1146 (PGPPGSTGPPGPPGLPGLP) has biased composition (pro residues). A Cell attachment site motif is present at residues 1152 to 1154 (RGD). Over residues 1228–1248 (PGAIIPGPKGDRGLPGLRGNP) the composition is skewed to low complexity. Over residues 1250 to 1259 (EPGPPGPPGP) the composition is skewed to pro residues. The Cell attachment site motif lies at 1304–1306 (RGD). The span at 1333-1343 (PVGPKGPPGPR) shows a compositional bias: pro residues. Composition is skewed to low complexity over residues 1366–1379 (QPGMKGDPGPLGLP) and 1402–1429 (PAGTKGNKGLKGQQGPPGLDGLPGLKGN). An epitope recognized by Goodpasture antibodies region spans residues 1425–1443 (GLKGNPGDRGTPATGTRMR). Residues 1444–1668 (GFIFTRHSQT…SRCQVCMKKR (225 aa)) enclose the Collagen IV NC1 domain. 6 cysteine pairs are disulfide-bonded: cysteine 1459-cysteine 1550, cysteine 1492-cysteine 1547, cysteine 1504-cysteine 1510, cysteine 1569-cysteine 1664, cysteine 1603-cysteine 1661, and cysteine 1615-cysteine 1621. The required for the anti-angiogenic activity of tumstatin stretch occupies residues 1478 to 1556 (NKRAHGQDLG…CTVCEGPAMA (79 aa)). An S-Lysyl-methionine sulfilimine (Met-Lys) (interchain with K-1650) cross-link involves residue methionine 1532. Positions 1609–1627 (ASPFIECHGRGTCNYYSNS) are required for the anti-tumor cell activity of tumstatin. An S-Lysyl-methionine sulfilimine (Lys-Met) (interchain with M-1532) cross-link involves residue lysine 1650.

It belongs to the type IV collagen family. As to quaternary structure, there are six type IV collagen isoforms, alpha 1(IV)-alpha 6(IV), each of which can form a triple helix structure with 2 other chains to generate type IV collagen network. The alpha 3(IV) chain forms a triple helical protomer with alpha 4(IV) and alpha 5(IV); this triple helical structure dimerizes through NC1-NC1 domain interactions such that the alpha 3(IV), alpha 4(IV) and alpha 5(IV) chains of one protomer connect with the alpha 5(IV), alpha 4(IV) and alpha 3(IV) chains of the opposite promoter, respectively. Interacts with ITGB3. Associates with LAMB2 at the neuromuscular junction and in GBM. Post-translationally, prolines at the third position of the tripeptide repeating unit (G-X-Y) are hydroxylated in some or all of the chains. In terms of processing, type IV collagens contain numerous cysteine residues which are involved in inter- and intramolecular disulfide bonding. 12 of these, located in the NC1 domain, are conserved in all known type IV collagens. The trimeric structure of the NC1 domains is stabilized by covalent bonds between Lys and Met residues. Post-translationally, phosphorylated. Thought to be phosphorylated by CERT, but CERT does not have kinase activity. As to expression, highly expressed in kidney and lung. Detected at lower levels in heart, muscle and skin.

It localises to the secreted. The protein localises to the extracellular space. It is found in the extracellular matrix. Its subcellular location is the basement membrane. Its function is as follows. Type IV collagen is the major structural component of glomerular basement membranes (GBM), forming a 'chicken-wire' meshwork together with laminins, proteoglycans and entactin/nidogen. In terms of biological role, tumstatin, a cleavage fragment corresponding to the collagen alpha 3(IV) NC1 domain, possesses both anti-angiogenic and anti-tumor cell activity; these two anti-tumor properties may be regulated via RGD-independent ITGB3-mediated mechanisms. This chain is Collagen alpha-3(IV) chain, found in Mus musculus (Mouse).